A 587-amino-acid polypeptide reads, in one-letter code: Heavy metal-associated isoprenylated plant protein 33 (587 aa).

Positions 9 to 72 (IQTCVLKVNI…KLLKSGKHAE (64 aa)) constitute an HMA domain. The a metal cation site is built by Cys20 and Cys23. 5 disordered regions span residues 98 to 146 (QIDH…MVIP), 176 to 261 (LKLP…KPMM), 287 to 449 (AHKN…PMSN), 462 to 504 (PGGG…QQQQ), and 532 to 587 (YARP…CNIM). 2 stretches are compositionally biased toward gly residues: residues 104-113 (KGGGGGGGGP) and 121-140 (KIGGGGGGGGGGGGGGGGGP). A compositionally biased stretch (low complexity) spans 194 to 208 (PMNKNPQMPNNPNQK). A compositionally biased stretch (acidic residues) spans 215–248 (PDDDDEEDFSDEFDDEFDEDDDEFDDDLEDDEFD). Composition is skewed to gly residues over residues 290–300 (NGGGPGPAGGK), 312–419 (MGGG…GGGP), and 428–445 (GAMGGPMGSLPQMGGGPG). The segment covering 471-483 (SAEAPPGYFQGQV) has biased composition (low complexity). 2 stretches are compositionally biased toward pro residues: residues 534–547 (RPPPAVNYMPPQPQ) and 554–565 (YPYPYPYPPQYP). Residues 578 to 587 (DENTSSCNIM) show a composition bias toward polar residues. Cys584 is modified (cysteine methyl ester). A lipid anchor (S-farnesyl cysteine) is attached at Cys584. A propeptide spans 585-587 (NIM) (removed in mature form).

This sequence belongs to the HIPP family.

In terms of biological role, heavy-metal-binding protein. The chain is Heavy metal-associated isoprenylated plant protein 33 from Arabidopsis thaliana (Mouse-ear cress).